The sequence spans 482 residues: tRNA sulfurtransferase (482 aa).

In terms of domain architecture, THUMP spans 61 to 165 (LAIRDALTRI…DDRLLLIKGR (105 aa)). Residues 183-184 (LI), Lys-265, Gly-287, and Gln-296 contribute to the ATP site. Cys-344 and Cys-456 are oxidised to a cystine. In terms of domain architecture, Rhodanese spans 404–482 (FGPNDVILDI…GFNNVKVYRP (79 aa)). Cys-456 functions as the Cysteine persulfide intermediate in the catalytic mechanism.

This sequence belongs to the ThiI family.

The protein resides in the cytoplasm. It catalyses the reaction [ThiI sulfur-carrier protein]-S-sulfanyl-L-cysteine + a uridine in tRNA + 2 reduced [2Fe-2S]-[ferredoxin] + ATP + H(+) = [ThiI sulfur-carrier protein]-L-cysteine + a 4-thiouridine in tRNA + 2 oxidized [2Fe-2S]-[ferredoxin] + AMP + diphosphate. It carries out the reaction [ThiS sulfur-carrier protein]-C-terminal Gly-Gly-AMP + S-sulfanyl-L-cysteinyl-[cysteine desulfurase] + AH2 = [ThiS sulfur-carrier protein]-C-terminal-Gly-aminoethanethioate + L-cysteinyl-[cysteine desulfurase] + A + AMP + 2 H(+). It functions in the pathway cofactor biosynthesis; thiamine diphosphate biosynthesis. In terms of biological role, catalyzes the ATP-dependent transfer of a sulfur to tRNA to produce 4-thiouridine in position 8 of tRNAs, which functions as a near-UV photosensor. Also catalyzes the transfer of sulfur to the sulfur carrier protein ThiS, forming ThiS-thiocarboxylate. This is a step in the synthesis of thiazole, in the thiamine biosynthesis pathway. The sulfur is donated as persulfide by IscS. The protein is tRNA sulfurtransferase of Escherichia coli (strain K12 / MC4100 / BW2952).